Reading from the N-terminus, the 378-residue chain is Glutamate 5-kinase (378 aa).

ATP is bound at residue lysine 15. Serine 56, aspartate 143, and asparagine 155 together coordinate substrate. Position 175–176 (175–176 (SD)) interacts with ATP. In terms of domain architecture, PUA spans 281-358 (KGTLTIDAGA…PDVAVILGIS (78 aa)).

Belongs to the glutamate 5-kinase family.

The protein localises to the cytoplasm. The catalysed reaction is L-glutamate + ATP = L-glutamyl 5-phosphate + ADP. The protein operates within amino-acid biosynthesis; L-proline biosynthesis; L-glutamate 5-semialdehyde from L-glutamate: step 1/2. In terms of biological role, catalyzes the transfer of a phosphate group to glutamate to form L-glutamate 5-phosphate. The protein is Glutamate 5-kinase of Bradyrhizobium sp. (strain BTAi1 / ATCC BAA-1182).